Here is a 115-residue protein sequence, read N- to C-terminus: Probable 4-amino-4-deoxy-L-arabinose-phosphoundecaprenol flippase subunit ArnE (115 aa).

3 helical membrane passes run 42-62, 65-85, and 93-112; these read PWPW…LLLL, VEVG…TLAA, and VDRR…VLLG. The EamA domain maps to 46 to 113; sequence LALLALGLGL…IVAGVVLLGR (68 aa).

The protein belongs to the ArnE family. As to quaternary structure, heterodimer of ArnE and ArnF.

It is found in the cell inner membrane. The protein operates within bacterial outer membrane biogenesis; lipopolysaccharide biosynthesis. Its function is as follows. Translocates 4-amino-4-deoxy-L-arabinose-phosphoundecaprenol (alpha-L-Ara4N-phosphoundecaprenol) from the cytoplasmic to the periplasmic side of the inner membrane. This Pseudomonas aeruginosa (strain UCBPP-PA14) protein is Probable 4-amino-4-deoxy-L-arabinose-phosphoundecaprenol flippase subunit ArnE.